The chain runs to 306 residues: RNA pseudouridylate synthase domain-containing protein 1 (306 aa).

The residue at position 1 (methionine 1) is an N-acetylmethionine. Residue aspartate 67 is part of the active site. Residues 255–290 (RTDPDPDPMSGGPRPCSPSTPQPRPGRPPPETEAQR) are disordered. A compositionally biased stretch (pro residues) spans 269-285 (PCSPSTPQPRPGRPPPE).

It belongs to the pseudouridine synthase RluA family.

The protein is RNA pseudouridylate synthase domain-containing protein 1 (Rpusd1) of Mus musculus (Mouse).